The following is a 984-amino-acid chain: Zinc finger and BTB domain-containing protein 4 (984 aa).

The region spanning 30–131 (CDVTLIAGDT…IYSARLALPG (102 aa)) is the BTB domain. Residue Lys40 forms a Glycyl lysine isopeptide (Lys-Gly) (interchain with G-Cter in SUMO2) linkage. Disordered regions lie at residues 71 to 104 (TGGS…PPRV), 172 to 210 (MVTS…RRPF), and 227 to 262 (THEA…ASAL). The span at 74 to 88 (SAPSPATTTAASSSS) shows a compositional bias: low complexity. Residues 165-324 (VPPAPSSMVT…CRYCEKVFAL (160 aa)) form an interaction with CBFA2T3 region. The C2H2-type 1; atypical zinc-finger motif lies at 210–232 (FPCPRCGKSFIHPKRLQTHEAQC). Residues 242–255 (AGLGPGGSGPGGPA) show a composition bias toward gly residues. 3 C2H2-type zinc fingers span residues 285-307 (YVCA…SNVH), 313-335 (YPCR…EVWH), and 341-364 (YQCI…RAFH). Position 367 is a phosphoserine (Ser367). The tract at residues 461–575 (GSSSSGAAGG…GSSQLQAPPP (115 aa)) is disordered. The segment covering 467 to 477 (AAGGGPVGTGG) has biased composition (gly residues). Composition is skewed to low complexity over residues 478–488 (SQAASVITYTT) and 507–529 (ATPT…ATAT). Lys548 is covalently cross-linked (Glycyl lysine isopeptide (Lys-Gly) (interchain with G-Cter in SUMO2)). The segment covering 552–565 (GVSGSGGSPTGTGR) has biased composition (gly residues). A Glycyl lysine isopeptide (Lys-Gly) (interchain with G-Cter in SUMO2) cross-link involves residue Lys590. Disordered regions lie at residues 593–696 (ISET…GERR), 713–734 (RKHQ…RSST), 756–836 (QRHA…VAGG), 853–876 (GGSR…ASEG), and 947–984 (QTAP…GDVG). A compositionally biased stretch (acidic residues) spans 604 to 627 (SGEEVEESEEEEEEEEEEDQEDQE). Over residues 628-637 (ESKAGGEDQL) the composition is skewed to basic and acidic residues. 2 consecutive C2H2-type zinc fingers follow at residues 697–719 (HRCG…QEAH) and 736–758 (FTCP…GQRH). Phosphothreonine; by HIPK2 occurs at positions 766 and 768. The span at 807–819 (AAAAAAEASESAS) shows a compositional bias: low complexity. Residues 948 to 966 (TAPPTPPTPPPPLPLPVPP) are compositionally biased toward pro residues. Phosphothreonine; by HIPK2 is present on Thr955.

In terms of assembly, interacts with HIPK2. Interacts with CBFA2T3. Interacts with ZBTB38. In terms of processing, phosphorylated by HIPK2. This phosphorylation reduces stability and triggers ZBTB4 protein degradation in response to DNA damage.

Its subcellular location is the nucleus. The protein resides in the chromosome. Its function is as follows. Transcriptional repressor with bimodal DNA-binding specificity. Represses transcription in a methyl-CpG-dependent manner. Binds with a higher affinity to methylated CpG dinucleotides in the consensus sequence 5'-CGCG-3' but can also bind to the non-methylated consensus sequence 5'-CTGCNA-3' also known as the consensus kaiso binding site (KBS). Can also bind specifically to a single methyl-CpG pair and can bind hemimethylated DNA but with a lower affinity compared to methylated DNA. Plays a role in postnatal myogenesis, may be involved in the regulation of satellite cells self-renewal. This chain is Zinc finger and BTB domain-containing protein 4 (Zbtb4), found in Rattus norvegicus (Rat).